The following is a 427-amino-acid chain: 3-isopropylmalate dehydratase large subunit (427 aa).

Residues Cys308, Cys368, and Cys371 each coordinate [4Fe-4S] cluster.

Belongs to the aconitase/IPM isomerase family. LeuC type 2 subfamily. As to quaternary structure, heterodimer of LeuC and LeuD. It depends on [4Fe-4S] cluster as a cofactor.

The enzyme catalyses (2R,3S)-3-isopropylmalate = (2S)-2-isopropylmalate. It functions in the pathway amino-acid biosynthesis; L-leucine biosynthesis; L-leucine from 3-methyl-2-oxobutanoate: step 2/4. Catalyzes the isomerization between 2-isopropylmalate and 3-isopropylmalate, via the formation of 2-isopropylmaleate. In Geobacter metallireducens (strain ATCC 53774 / DSM 7210 / GS-15), this protein is 3-isopropylmalate dehydratase large subunit.